The chain runs to 221 residues: Ethylene-inducing xylanase 4 (221 aa).

Residues 1-19 form the signal peptide; the sequence is MVSFSTLLTACTAITGALG. One can recognise a GH11 domain in the interval 28 to 218; the sequence is NVTPNAQGTH…SAGRASVVVE (191 aa). The N-linked (GlcNAc...) asparagine glycan is linked to N96. The active-site Nucleophile is E114. E205 serves as the catalytic Proton donor.

The protein belongs to the glycosyl hydrolase 11 (cellulase G) family.

It carries out the reaction Endohydrolysis of (1-&gt;4)-beta-D-xylosidic linkages in xylans.. It functions in the pathway glycan degradation; xylan degradation. Functionally, endo-1,4-beta-xylanase involved in the hydrolysis of xylan, a major structural heterogeneous polysaccharide found in plant biomass representing the second most abundant polysaccharide in the biosphere, after cellulose. May act as an elicitor of plant defense responses in certain plants but does not exhibit any cell death when transiently expressed in N.benthamiana. In Verticillium dahliae (strain VdLs.17 / ATCC MYA-4575 / FGSC 10137) (Verticillium wilt), this protein is Ethylene-inducing xylanase 4.